Here is an 887-residue protein sequence, read N- to C-terminus: Bifunctional uridylyltransferase/uridylyl-removing enzyme (887 aa).

Residues 1 to 337 are uridylyltransferase; sequence MINTSPLLNY…RLPNYERKIE (337 aa). The segment at 339-699 is uridylyl-removing; the sequence is VNDHFKIVDN…AHRKAAQDAV (361 aa). The 123-residue stretch at 457–579 folds into the HD domain; it reads VDAHTLLLLR…LGDMEHLDYL (123 aa). 2 consecutive ACT domains span residues 700–782 and 809–887; these read QIFI…LMQR and MVEI…ICQH.

This sequence belongs to the GlnD family. Mg(2+) serves as cofactor.

The catalysed reaction is [protein-PII]-L-tyrosine + UTP = [protein-PII]-uridylyl-L-tyrosine + diphosphate. It carries out the reaction [protein-PII]-uridylyl-L-tyrosine + H2O = [protein-PII]-L-tyrosine + UMP + H(+). Its activity is regulated as follows. Uridylyltransferase (UTase) activity is inhibited by glutamine, while glutamine activates uridylyl-removing (UR) activity. Functionally, modifies, by uridylylation and deuridylylation, the PII regulatory proteins (GlnB and homologs), in response to the nitrogen status of the cell that GlnD senses through the glutamine level. Under low glutamine levels, catalyzes the conversion of the PII proteins and UTP to PII-UMP and PPi, while under higher glutamine levels, GlnD hydrolyzes PII-UMP to PII and UMP (deuridylylation). Thus, controls uridylylation state and activity of the PII proteins, and plays an important role in the regulation of nitrogen assimilation and metabolism. This chain is Bifunctional uridylyltransferase/uridylyl-removing enzyme, found in Acinetobacter baumannii (strain ACICU).